Reading from the N-terminus, the 407-residue chain is CCA-adding enzyme (407 aa).

ATP is bound by residues Gly32 and Arg35. Positions 32 and 35 each coordinate CTP. Asp45 and Asp47 together coordinate Mg(2+). Residues Arg116, Asp159, Arg162, Arg165, and Arg168 each contribute to the ATP site. CTP contacts are provided by Arg116, Asp159, Arg162, Arg165, and Arg168.

This sequence belongs to the tRNA nucleotidyltransferase/poly(A) polymerase family. Bacterial CCA-adding enzyme type 3 subfamily. Homodimer. The cofactor is Mg(2+).

It catalyses the reaction a tRNA precursor + 2 CTP + ATP = a tRNA with a 3' CCA end + 3 diphosphate. The catalysed reaction is a tRNA with a 3' CCA end + 2 CTP + ATP = a tRNA with a 3' CCACCA end + 3 diphosphate. Its function is as follows. Catalyzes the addition and repair of the essential 3'-terminal CCA sequence in tRNAs without using a nucleic acid template. Adds these three nucleotides in the order of C, C, and A to the tRNA nucleotide-73, using CTP and ATP as substrates and producing inorganic pyrophosphate. tRNA 3'-terminal CCA addition is required both for tRNA processing and repair. Also involved in tRNA surveillance by mediating tandem CCA addition to generate a CCACCA at the 3' terminus of unstable tRNAs. While stable tRNAs receive only 3'-terminal CCA, unstable tRNAs are marked with CCACCA and rapidly degraded. The protein is CCA-adding enzyme of Lactiplantibacillus plantarum (strain ATCC BAA-793 / NCIMB 8826 / WCFS1) (Lactobacillus plantarum).